A 176-amino-acid chain; its full sequence is Small ribosomal subunit protein uS4 (176 aa).

Positions 104-166 (RRLQTIVYKK…PTSPFKQNPP (63 aa)) constitute an S4 RNA-binding domain.

The protein belongs to the universal ribosomal protein uS4 family. In terms of assembly, part of the 30S ribosomal subunit. Contacts protein S5. The interaction surface between S4 and S5 is involved in control of translational fidelity.

Functionally, one of the primary rRNA binding proteins, it binds directly to 16S rRNA where it nucleates assembly of the body of the 30S subunit. With S5 and S12 plays an important role in translational accuracy. The sequence is that of Small ribosomal subunit protein uS4 (rps4) from Sulfolobus acidocaldarius (strain ATCC 33909 / DSM 639 / JCM 8929 / NBRC 15157 / NCIMB 11770).